The chain runs to 414 residues: Serine/threonine-protein kinase 32B (414 aa).

Residues Phe-23–Leu-283 form the Protein kinase domain. ATP contacts are provided by residues Ile-29 to Val-37 and Lys-52. The active-site Proton acceptor is the Asp-146. Residues Gln-374–Gln-396 form a disordered region.

The protein belongs to the protein kinase superfamily. Ser/Thr protein kinase family. Mg(2+) serves as cofactor.

The enzyme catalyses L-seryl-[protein] + ATP = O-phospho-L-seryl-[protein] + ADP + H(+). It carries out the reaction L-threonyl-[protein] + ATP = O-phospho-L-threonyl-[protein] + ADP + H(+). In Homo sapiens (Human), this protein is Serine/threonine-protein kinase 32B.